The chain runs to 333 residues: 4-hydroxy-2-oxovalerate aldolase (333 aa).

In terms of domain architecture, Pyruvate carboxyltransferase spans V4–M254. R12–D13 provides a ligand contact to substrate. D13 contacts Mn(2+). H16 acts as the Proton acceptor in catalysis. Residue H193 participates in substrate binding. Mn(2+) is bound by residues H193 and H195. Y284 lines the substrate pocket.

It belongs to the 4-hydroxy-2-oxovalerate aldolase family.

It catalyses the reaction (S)-4-hydroxy-2-oxopentanoate = acetaldehyde + pyruvate. This is 4-hydroxy-2-oxovalerate aldolase from Desulfitobacterium hafniense (strain DSM 10664 / DCB-2).